The sequence spans 539 residues: Ell-associated factor Eaf (539 aa).

Residues 119–539 form a disordered region; it reads TRSEMTHHKP…SSNSSDDDDD (421 aa). Polar residues predominate over residues 132–146; sequence PATNINHNNIPMSTN. Over residues 151–163 the composition is skewed to pro residues; sequence GPGPGPGSGPSPP. Residues 174-195 show a composition bias toward polar residues; it reads KLENSTMRISSKTKVSTGSRRN. Ser-205 carries the post-translational modification Phosphoserine. Residues 220–238 show a composition bias toward polar residues; the sequence is RSPQSAPAWNANNAQQTLP. 3 stretches are compositionally biased toward low complexity: residues 267–278, 309–337, and 345–375; these read SGSSTGSSTGQP, MHQNHQQHPSPPMHQQQQQQQQQQHYGRG, and NNYAQQQQPQQHHQQQEQQRPSSSSTYSHHS. The span at 420–435 shows a compositional bias: acidic residues; sequence DSSDSDSGSESDDSTD. 2 stretches are compositionally biased toward low complexity: residues 461–493 and 520–533; these read HQQLQQQPPQQQQQQQQQQQYNHHMQQQHQPQQ and NDLLQNDLQLSSNS.

Belongs to the EAF family.

It localises to the nucleus. Promotes transcriptional elongation by Su(Tpl)/ELL. Essential for development. The protein is Ell-associated factor Eaf of Drosophila willistoni (Fruit fly).